The sequence spans 418 residues: MFSKGMEIAGFDDELWAAIQEEERRQEDHIELIASENYASPRVLQAQGTVLTNKYAEGYPGKRYYGGCEYVDIVETLAIERAKRLFGADYANVQPHSGSQANAAVYMALLKPGDTVLGMSLAHGGHLTHGAKVNFSGKIYNAVQYGLNPETGEIDYDQVDELAREHRPKMIVAGFSAYSQVVDWQRFRAIADSVGAWLMVDMAHVAGLIAAGLYPSPVQIADVTTTTTHKTLRGPRGGLILAKANPEVEKQLNSLVFPGIQGGPLMHVIAAKAVALKEALQPDFRHYQSAVMENADAMAKTFIERGYRIVSGGTRNHLFLVDLIQKGLTGKLAEEVLGRAHITVNKNAVPNDPQSPFVTSGIRVGTPAVTTRGFGVEECRLLAGWMCDIMDCPGDETVIGQVREEVTHLCRRFPVYAN.

Residues Leu-121 and 125–127 contribute to the (6S)-5,6,7,8-tetrahydrofolate site; that span reads GHL. Lys-230 bears the N6-(pyridoxal phosphate)lysine mark. Position 355–357 (355–357) interacts with (6S)-5,6,7,8-tetrahydrofolate; sequence SPF.

The protein belongs to the SHMT family. Homodimer. Pyridoxal 5'-phosphate serves as cofactor.

The protein resides in the cytoplasm. The catalysed reaction is (6R)-5,10-methylene-5,6,7,8-tetrahydrofolate + glycine + H2O = (6S)-5,6,7,8-tetrahydrofolate + L-serine. The protein operates within one-carbon metabolism; tetrahydrofolate interconversion. It functions in the pathway amino-acid biosynthesis; glycine biosynthesis; glycine from L-serine: step 1/1. In terms of biological role, catalyzes the reversible interconversion of serine and glycine with tetrahydrofolate (THF) serving as the one-carbon carrier. This reaction serves as the major source of one-carbon groups required for the biosynthesis of purines, thymidylate, methionine, and other important biomolecules. Also exhibits THF-independent aldolase activity toward beta-hydroxyamino acids, producing glycine and aldehydes, via a retro-aldol mechanism. The sequence is that of Serine hydroxymethyltransferase from Methylococcus capsulatus (strain ATCC 33009 / NCIMB 11132 / Bath).